We begin with the raw amino-acid sequence, 847 residues long: Leucine--tRNA ligase (847 aa).

Positions Pro-41–His-51 match the 'HIGH' region motif. Positions Lys-619–Ser-623 match the 'KMSKS' region motif. Lys-622 contacts ATP.

It belongs to the class-I aminoacyl-tRNA synthetase family.

It is found in the cytoplasm. The catalysed reaction is tRNA(Leu) + L-leucine + ATP = L-leucyl-tRNA(Leu) + AMP + diphosphate. The sequence is that of Leucine--tRNA ligase from Cereibacter sphaeroides (strain KD131 / KCTC 12085) (Rhodobacter sphaeroides).